Consider the following 308-residue polypeptide: FGSLLGICLLTQIITGLLLAMHYTADTSLAFTSVAHTCRNVQFGWLIRNLHANGASFFFICIYFHIGRGIYYGSYLNKETWNIGVILLLTLMATAFVGYVLPWGQMSFWGATVITNLFSAIPYIGQTLVEWAWGGFSVDNPTLTRFFALHFLLPFVIAGLTLVHLTFLHETGSNNPLGIPSDCDKIPFHPYYSTKDILGFALMFILLVSLALFSPNSLGDPENFTPANPLSTPPHIKPEWYFLFAYAILRSIPNKLGGVLALAASVLVLFLLPLLHTSKQRSMTFRPLSQILFWALVANLLILTWVGS.

The next 4 helical transmembrane spans lie at 1 to 21 (FGSL…LLAM), 45 to 66 (WLIR…YFHI), 81 to 101 (WNIG…GYVL), and 146 to 166 (FFAL…VHLT). Residues His51 and His65 each coordinate heme b. Residues His150 and His164 each coordinate heme b. His169 serves as a coordination point for a ubiquinone. The next 3 membrane-spanning stretches (helical) occupy residues 194-214 (TKDI…ALFS), 256-276 (LGGV…PLLH), and 288-308 (LSQI…WVGS).

Belongs to the cytochrome b family. The cytochrome bc1 complex contains 11 subunits: 3 respiratory subunits (MT-CYB, CYC1 and UQCRFS1), 2 core proteins (UQCRC1 and UQCRC2) and 6 low-molecular weight proteins (UQCRH/QCR6, UQCRB/QCR7, UQCRQ/QCR8, UQCR10/QCR9, UQCR11/QCR10 and a cleavage product of UQCRFS1). This cytochrome bc1 complex then forms a dimer. It depends on heme b as a cofactor.

Its subcellular location is the mitochondrion inner membrane. Component of the ubiquinol-cytochrome c reductase complex (complex III or cytochrome b-c1 complex) that is part of the mitochondrial respiratory chain. The b-c1 complex mediates electron transfer from ubiquinol to cytochrome c. Contributes to the generation of a proton gradient across the mitochondrial membrane that is then used for ATP synthesis. This is Cytochrome b (MT-CYB) from Baeolophus inornatus (Oak titmouse).